Consider the following 357-residue polypeptide: MTQEVLILPGDGIGPEITAEAVKVLEALQQKDNLDISMTHDLVGGAAYDQHGVPLAEETLEKAKQSDAILLGAVGGYQWESLDISVRPEKGLLALRSNLELFANLRPAYLFPQLADASTLKPEVVAGLDILIVRELTGGIYFGQPRGIRTLDNGERQGYNTYVYSESEIKRIAHVAFDAAMKRNKKLCSVDKANVLEVTEMWREIVDEVAKEYPEVEVQHMYVDNAAMQLVLNPKQFDVMVTGNMFGDILSDEASMLTGSIGMLASASLDANNKGMYEPSHGSAPDIAGQNIANPLATILSAAMMLRYSLNREDLALKIETAVSKVLDQGLRTGDIWSEGLTKVSTSEMGDAVVAAL.

76–89 (GYQWESLDISVRPE) lines the NAD(+) pocket. Positions 96, 106, 134, and 224 each coordinate substrate. 3 residues coordinate Mg(2+): D224, D248, and D252. 282-294 (GSAPDIAGQNIAN) serves as a coordination point for NAD(+).

Belongs to the isocitrate and isopropylmalate dehydrogenases family. LeuB type 1 subfamily. As to quaternary structure, homodimer. Requires Mg(2+) as cofactor. Mn(2+) is required as a cofactor.

Its subcellular location is the cytoplasm. The enzyme catalyses (2R,3S)-3-isopropylmalate + NAD(+) = 4-methyl-2-oxopentanoate + CO2 + NADH. It participates in amino-acid biosynthesis; L-leucine biosynthesis; L-leucine from 3-methyl-2-oxobutanoate: step 3/4. Its function is as follows. Catalyzes the oxidation of 3-carboxy-2-hydroxy-4-methylpentanoate (3-isopropylmalate) to 3-carboxy-4-methyl-2-oxopentanoate. The product decarboxylates to 4-methyl-2 oxopentanoate. The sequence is that of 3-isopropylmalate dehydrogenase from Hydrogenovibrio crunogenus (strain DSM 25203 / XCL-2) (Thiomicrospira crunogena).